A 450-amino-acid chain; its full sequence is CD209 antigen (450 aa).

Topologically, residues 1-37 (MSDSKEPSVQQLGLLEEEQLRGLGFRQTRGYKSLAGC) are cytoplasmic. Short sequence motifs (endocytosis signal) lie at residues 14–15 (LL), 16–18 (EEE), and 31–34 (YKSL). The helical; Signal-anchor for type II membrane protein transmembrane segment at 38-58 (LGHGALVLQLLSFTLLAGLLI) threads the bilayer. The Extracellular portion of the chain corresponds to 59 to 450 (QVSKFPSSIS…APATPNPPPV (392 aa)). An N-linked (GlcNAc...) asparagine glycan is attached at asparagine 80. A run of 9 repeats spans residues 96 to 118 (KLQEIYQELTQLKAAVGELPEKS), 119 to 141 (KQQEIYQELTRLKAAVGELPEKS), 142 to 164 (KQQEIYQELTRLKAAVGELPEKS), 165 to 187 (KQQEIYQELTRLKAAVGELPEKS), 188 to 210 (KQQEIYQELTRLKAAVGELPEKS), 211 to 233 (KQQEIYQELTRLKAAVGELPEKS), 234 to 256 (KQQEIYQELTRLKAAVGELPEKS), 257 to 279 (KQQEIYQELTRLKAAVGELPEKS), and 280 to 303 (KQQEIYQELTQLKAAVERLCRPCP). Residues 96 to 303 (KLQEIYQELT…AVERLCRPCP (208 aa)) form a 9 X approximate tandem repeats region. 3 cysteine pairs are disulfide-bonded: cysteine 302–cysteine 313, cysteine 330–cysteine 423, and cysteine 402–cysteine 415. Residues 309–424 (FQGNCYFMSN…CNLAKFWICK (116 aa)) enclose the C-type lectin domain. Positions 393, 395, 397, 400, 411, and 412 each coordinate Ca(2+).

In terms of assembly, homotetramer. Interacts with C1QBP; the interaction is indicative for a C1q:C1QBP:CD209 signaling complex. Interacts with ICAM2 and ICAM3 by binding to mannose-like carbohydrates. Interacts (via C-type lectin domain) with CEACAM1 (via Lewis X moieties); this interaction is regulated by the glycosylation pattern of CEACAM1 on cell types and regulates contact between dendritic cells and neutrophils.

The protein resides in the membrane. In terms of biological role, pathogen-recognition receptor expressed on the surface of immature dendritic cells (DCs) and involved in initiation of primary immune response. Thought to mediate the endocytosis of pathogens which are subsequently degraded in lysosomal compartments. The receptor returns to the cell membrane surface and the pathogen-derived antigens are presented to resting T-cells via MHC class II proteins to initiate the adaptive immune response. Probably recognizes in a calcium-dependent manner high mannose N-linked oligosaccharides in a variety of pathogen antigens. Its function is as follows. On DCs it is a high affinity receptor for ICAM2 and ICAM3 by binding to mannose-like carbohydrates. May act as a DC rolling receptor that mediates transendothelial migration of DC presursors from blood to tissues by binding endothelial ICAM2. Seems to regulate DC-induced T-cell proliferation by binding to ICAM3 on T-cells in the immunological synapse formed between DC and T-cells. The sequence is that of CD209 antigen (CD209) from Hylobates lar (Lar gibbon).